The following is a 156-amino-acid chain: Ribosomal RNA large subunit methyltransferase H (156 aa).

Residues Leu-73, Gly-104, and 123–128 each bind S-adenosyl-L-methionine; that span reads LSPLTL.

The protein belongs to the RNA methyltransferase RlmH family. Homodimer.

The protein resides in the cytoplasm. The catalysed reaction is pseudouridine(1915) in 23S rRNA + S-adenosyl-L-methionine = N(3)-methylpseudouridine(1915) in 23S rRNA + S-adenosyl-L-homocysteine + H(+). Functionally, specifically methylates the pseudouridine at position 1915 (m3Psi1915) in 23S rRNA. This chain is Ribosomal RNA large subunit methyltransferase H, found in Photobacterium profundum (strain SS9).